The sequence spans 358 residues: Protein-arginine kinase (358 aa).

The Phosphagen kinase C-terminal domain occupies 23–250 (VWPVTTFSLA…SKLSVAEVAA (228 aa)). ATP is bound by residues 26–30 (VTTFS), 174–178 (KSQCF), and 203–208 (SSLLLG).

The protein belongs to the ATP:guanido phosphotransferase family.

It catalyses the reaction L-arginyl-[protein] + ATP = N(omega)-phospho-L-arginyl-[protein] + ADP + H(+). Functionally, catalyzes the specific phosphorylation of arginine residues in proteins. The polypeptide is Protein-arginine kinase (Chlamydia pneumoniae (Chlamydophila pneumoniae)).